Consider the following 138-residue polypeptide: Large ribosomal subunit protein bL17 (138 aa).

It belongs to the bacterial ribosomal protein bL17 family. In terms of assembly, part of the 50S ribosomal subunit. Contacts protein L32.

This is Large ribosomal subunit protein bL17 from Methylorubrum populi (strain ATCC BAA-705 / NCIMB 13946 / BJ001) (Methylobacterium populi).